The chain runs to 299 residues: Phosphoribosylaminoimidazole-succinocarboxamide synthase (299 aa).

The protein belongs to the SAICAR synthetase family.

It carries out the reaction 5-amino-1-(5-phospho-D-ribosyl)imidazole-4-carboxylate + L-aspartate + ATP = (2S)-2-[5-amino-1-(5-phospho-beta-D-ribosyl)imidazole-4-carboxamido]succinate + ADP + phosphate + 2 H(+). It participates in purine metabolism; IMP biosynthesis via de novo pathway; 5-amino-1-(5-phospho-D-ribosyl)imidazole-4-carboxamide from 5-amino-1-(5-phospho-D-ribosyl)imidazole-4-carboxylate: step 1/2. The sequence is that of Phosphoribosylaminoimidazole-succinocarboxamide synthase (ade7) from Schizosaccharomyces pombe (strain 972 / ATCC 24843) (Fission yeast).